A 77-amino-acid chain; its full sequence is Large ribosomal subunit protein uL24c (77 aa).

This sequence belongs to the universal ribosomal protein uL24 family. Part of the 50S ribosomal subunit.

It is found in the plastid. Its subcellular location is the chloroplast. One of two assembly initiator proteins, it binds directly to the 5'-end of the 23S rRNA, where it nucleates assembly of the 50S subunit. This is Large ribosomal subunit protein uL24c (rpl24) from Thalassiosira pseudonana (Marine diatom).